The sequence spans 218 residues: Small ribosomal subunit protein uS3 (218 aa).

The KH type-2 domain occupies 38-106 (IRDYVAKRLS…RVHINIVEIK (69 aa)).

This sequence belongs to the universal ribosomal protein uS3 family. In terms of assembly, part of the 30S ribosomal subunit. Forms a tight complex with proteins S10 and S14.

In terms of biological role, binds the lower part of the 30S subunit head. Binds mRNA in the 70S ribosome, positioning it for translation. The protein is Small ribosomal subunit protein uS3 of Listeria monocytogenes serotype 4b (strain F2365).